Reading from the N-terminus, the 293-residue chain is MSDNSTGTTKSRSNVDDVQAHYDLSDAFFALFQDPTRTYSCAYFERDDMTLHEAQVAKLDLTLGKLGLEPGMTLLDVGCGWGSVMKRAVERYDVNVVGLTLSKNQHAYCQQVLDKVDTNRSHRVLLSDWANFSEPVDRIVTIEAIEHFGFERYDDFFKFAYNAMPADGVMLLHSITGLHVKQVIERGIPLTMEMAKFIRFIVTDIFPGGRLPTIETIEEHVTKAGFTITDIQSLQPHFARTLDLWAEALQAHKDEAIEIQSAEVYERYMKYLTGCAKAFRMGYIDCNQFTLAK.

S-adenosyl-L-methionine contacts are provided by residues 39-40, 78-80, 100-105, 129-130, and Ile142; these read YS, GCG, TLSKNQ, and WA. Residue Cys275 is part of the active site.

Belongs to the CFA/CMAS family.

The protein operates within lipid metabolism; mycolic acid biosynthesis. Its function is as follows. Involved in the biosynthesis of methoxymycolic acid. It catalyzes the O-methylation of the hydroxy group of the hydroxymycolate to form a methyl ether. This is Methoxy mycolic acid synthase MmaA3 (cmaB) from Mycobacterium bovis (strain ATCC BAA-935 / AF2122/97).